The sequence spans 103 residues: Small ribosomal subunit protein bS18 (103 aa).

Basic and acidic residues predominate over residues 1-19; it reads MSEERTERPERTERPERPQ. Residues 1–33 form a disordered region; it reads MSEERTERPERTERPERPQQRGSGPRKRRPFQR. The segment covering 24–33 has biased composition (basic residues); that stretch reads GPRKRRPFQR.

This sequence belongs to the bacterial ribosomal protein bS18 family. In terms of assembly, part of the 30S ribosomal subunit. Forms a tight heterodimer with protein bS6.

In terms of biological role, binds as a heterodimer with protein bS6 to the central domain of the 16S rRNA, where it helps stabilize the platform of the 30S subunit. The protein is Small ribosomal subunit protein bS18 of Geobacter sulfurreducens (strain ATCC 51573 / DSM 12127 / PCA).